Here is a 318-residue protein sequence, read N- to C-terminus: GTP 3',8-cyclase (318 aa).

Positions 5 to 217 (KFERKIDYIR…DKIAKKYKFK (213 aa)) constitute a Radical SAM core domain. Arg-14 is a binding site for GTP. Cys-21 and Cys-25 together coordinate [4Fe-4S] cluster. Tyr-27 provides a ligand contact to S-adenosyl-L-methionine. [4Fe-4S] cluster is bound at residue Cys-28. Arg-64 serves as a coordination point for GTP. Position 68 (Gly-68) interacts with S-adenosyl-L-methionine. Residue Thr-95 participates in GTP binding. Ser-119 contacts S-adenosyl-L-methionine. A GTP-binding site is contributed by Lys-155. Met-189 is a binding site for S-adenosyl-L-methionine. 2 residues coordinate [4Fe-4S] cluster: Cys-248 and Cys-251. 253–255 (RIR) provides a ligand contact to GTP. Position 265 (Cys-265) interacts with [4Fe-4S] cluster.

Belongs to the radical SAM superfamily. MoaA family. As to quaternary structure, monomer and homodimer. The cofactor is [4Fe-4S] cluster.

It carries out the reaction GTP + AH2 + S-adenosyl-L-methionine = (8S)-3',8-cyclo-7,8-dihydroguanosine 5'-triphosphate + 5'-deoxyadenosine + L-methionine + A + H(+). The protein operates within cofactor biosynthesis; molybdopterin biosynthesis. In terms of biological role, catalyzes the cyclization of GTP to (8S)-3',8-cyclo-7,8-dihydroguanosine 5'-triphosphate. This Nautilia profundicola (strain ATCC BAA-1463 / DSM 18972 / AmH) protein is GTP 3',8-cyclase.